We begin with the raw amino-acid sequence, 140 residues long: PDZ domain-containing protein 11 (140 aa).

Positions 47-129 (TVVLKKPPGA…ITMRVRYFPY (83 aa)) constitute a PDZ domain.

It is found in the cytoplasm. The chain is PDZ domain-containing protein 11 (PDZD11) from Gallus gallus (Chicken).